A 235-amino-acid polypeptide reads, in one-letter code: Thrombin-like enzyme bilineobin (235 aa).

The 227-residue stretch at 1 to 227 folds into the Peptidase S1 domain; it reads IIGGDECNIN…HLDWIQSIIA (227 aa). Intrachain disulfides connect C7–C141, C28–C44, C78–C234, C120–C188, C152–C167, and C178–C203. Residue H43 is the Charge relay system of the active site. 3 N-linked (GlcNAc...) asparagine glycosylation sites follow: N45, N57, and N81. The active-site Charge relay system is the D88. 2 N-linked (GlcNAc...) asparagine glycosylation sites follow: N132 and N148. The active-site Charge relay system is the S182. A glycan (N-linked (GlcNAc...) asparagine) is linked at N229.

This sequence belongs to the peptidase S1 family. Snake venom subfamily. As to quaternary structure, monomer. Post-translationally, glycosylated. In terms of tissue distribution, expressed by the venom gland.

It is found in the secreted. Its activity is regulated as follows. Not inhibited by hirudin. Functionally, thrombin-like snake venom serine protease that has coagulant activity by releasing fibrinopeptides A and B from fibrinogen alpha (FGA) and beta (FGB), with a preference for beta chain. The chain is Thrombin-like enzyme bilineobin from Agkistrodon bilineatus (Cantil).